A 109-amino-acid polypeptide reads, in one-letter code: Putative double-stranded DNA mimic protein KPK_2119 (109 aa).

Belongs to the putative dsDNA mimic protein family.

Functionally, may act as a double-stranded DNA (dsDNA) mimic. Probably regulates the activity of a dsDNA-binding protein. The chain is Putative double-stranded DNA mimic protein KPK_2119 from Klebsiella pneumoniae (strain 342).